The sequence spans 541 residues: Peptide chain release factor 3 (541 aa).

The tr-type G domain maps to 14–283 (EARRNFAIIS…AFLDYALKPG (270 aa)). GTP contacts are provided by residues 23–30 (SHPDAGKT), 91–95 (DTPGH), and 145–148 (NKLD).

The protein belongs to the TRAFAC class translation factor GTPase superfamily. Classic translation factor GTPase family. PrfC subfamily.

The protein localises to the cytoplasm. Functionally, increases the formation of ribosomal termination complexes and stimulates activities of RF-1 and RF-2. It binds guanine nucleotides and has strong preference for UGA stop codons. It may interact directly with the ribosome. The stimulation of RF-1 and RF-2 is significantly reduced by GTP and GDP, but not by GMP. The protein is Peptide chain release factor 3 of Acaryochloris marina (strain MBIC 11017).